A 233-amino-acid polypeptide reads, in one-letter code: Small ribosomal subunit protein uS2c (233 aa).

It belongs to the universal ribosomal protein uS2 family.

It localises to the plastid. The protein resides in the cyanelle. This is Small ribosomal subunit protein uS2c (rps2) from Cyanophora paradoxa.